The sequence spans 30 residues: Kalata-B17 (30 aa).

The cyclopeptide (Gly-Asn) cross-link spans 1-30 (GIPCAESCVYIPCTITALLGCKCKDQVCYN). Disulfide bonds link C4-C21, C8-C23, and C13-C28.

In terms of processing, this is a cyclic peptide.

Probably participates in a plant defense mechanism. In Oldenlandia affinis, this protein is Kalata-B17.